The primary structure comprises 89 residues: DNA-directed RNA polymerase subunit Rpo6 (89 aa).

This sequence belongs to the archaeal Rpo6/eukaryotic RPB6 RNA polymerase subunit family. Part of the 13-subunit RNA polymerase complex.

Its subcellular location is the cytoplasm. The catalysed reaction is RNA(n) + a ribonucleoside 5'-triphosphate = RNA(n+1) + diphosphate. Functionally, DNA-dependent RNA polymerase (RNAP) catalyzes the transcription of DNA into RNA using the four ribonucleoside triphosphates as substrates. Reconstitution experiments show this subunit is required for basic activity. The protein is DNA-directed RNA polymerase subunit Rpo6 of Sulfolobus acidocaldarius (strain ATCC 33909 / DSM 639 / JCM 8929 / NBRC 15157 / NCIMB 11770).